We begin with the raw amino-acid sequence, 102 residues long: Large ribosomal subunit protein bL21 (102 aa).

It belongs to the bacterial ribosomal protein bL21 family. In terms of assembly, part of the 50S ribosomal subunit. Contacts protein L20.

This protein binds to 23S rRNA in the presence of protein L20. This Bifidobacterium animalis subsp. lactis (strain AD011) protein is Large ribosomal subunit protein bL21.